A 729-amino-acid chain; its full sequence is Oligopeptide transporter 4 (729 aa).

Ala-2 is subject to N-acetylalanine. Ser-8 is modified (phosphoserine). A run of 16 helical transmembrane segments spans residues 37-57, 61-81, 123-143, 148-168, 177-194, 207-227, 256-276, 279-299, 352-372, 410-430, 438-458, 522-542, 592-612, 621-637, 640-660, and 673-693; these read MWFL…FFSY, PLVI…HFLA, AFGS…AFYG, FIAG…WAGL, AHMW…FRAL, FFVI…YLFT, GLGA…SPLI, FFAI…VLPL, LSMF…STLT, WWFY…CVFL, WWGL…ISII, FLVQ…VAWW, YAAM…VWSL, WIPL…TAMM, ATAV…LFVF, and VLSA…YFSV.

It belongs to the oligopeptide OPT transporter (TC 2.A.67.1) family. In terms of tissue distribution, expressed in flowers, leaves, roots, and stems.

It localises to the membrane. In terms of biological role, involved in the translocation of tetra- and pentapeptides across the cellular membrane in an energy-dependent manner. This is Oligopeptide transporter 4 (OPT4) from Arabidopsis thaliana (Mouse-ear cress).